The sequence spans 562 residues: Arylsulfatase H (562 aa).

Residues D15, D16, and C55 each contribute to the Ca(2+) site. The Nucleophile role is filled by C55. C55 bears the 3-oxoalanine (Cys) mark. Substrate is bound at residue K115. H117 is a catalytic residue. A run of 2 helical transmembrane segments spans residues L167 to A187 and W189 to I209. H271 contributes to the substrate binding site. D323 and N324 together coordinate Ca(2+).

It belongs to the sulfatase family. Ca(2+) is required as a cofactor. Post-translationally, the conversion to 3-oxoalanine (also known as C-formylglycine, FGly), of a serine or cysteine residue in prokaryotes and of a cysteine residue in eukaryotes, is critical for catalytic activity.

The protein resides in the membrane. The sequence is that of Arylsulfatase H (ARSH) from Canis lupus familiaris (Dog).